We begin with the raw amino-acid sequence, 274 residues long: WIMGHMVNAIEQVDEFLNLGANAIELDIDFDKDGIAQITHHGIPCDCGRECTKKAIFTEYLDNIRQVTTPDNPKFREQLVLLALDLKLQRISSAKAYRAGEDVAKKLLDHYWQRGNSRARAYILLNIPLVEDCEFIRAFKDTLKNEGYESYNDKVGINFTGNEDLDKIRDVLEILGIHKQVWQADGITSCFARGTERLKEALEKRDTPGYNYINKVYAWTLVRKSIMRRSLRLGVDGVMSNNPDRVIKVLKEKEFADKFRLATYNDNPWEKFRG.

His5 is a catalytic residue. Mg(2+) contacts are provided by Glu25 and Asp27. His41 (nucleophile) is an active-site residue. Cystine bridges form between Cys45–Cys51 and Cys47–Cys190. Residue Asp85 participates in Mg(2+) binding.

This sequence belongs to the arthropod phospholipase D family. Class II subfamily. It depends on Mg(2+) as a cofactor. Expressed by the venom gland.

It localises to the secreted. It catalyses the reaction an N-(acyl)-sphingosylphosphocholine = an N-(acyl)-sphingosyl-1,3-cyclic phosphate + choline. It carries out the reaction an N-(acyl)-sphingosylphosphoethanolamine = an N-(acyl)-sphingosyl-1,3-cyclic phosphate + ethanolamine. The enzyme catalyses a 1-acyl-sn-glycero-3-phosphocholine = a 1-acyl-sn-glycero-2,3-cyclic phosphate + choline. The catalysed reaction is a 1-acyl-sn-glycero-3-phosphoethanolamine = a 1-acyl-sn-glycero-2,3-cyclic phosphate + ethanolamine. Functionally, dermonecrotic toxins cleave the phosphodiester linkage between the phosphate and headgroup of certain phospholipids (sphingolipid and lysolipid substrates), forming an alcohol (often choline) and a cyclic phosphate. This toxin acts on sphingomyelin (SM). It may also act on ceramide phosphoethanolamine (CPE), lysophosphatidylcholine (LPC) and lysophosphatidylethanolamine (LPE), but not on lysophosphatidylserine (LPS), and lysophosphatidylglycerol (LPG). It acts by transphosphatidylation, releasing exclusively cyclic phosphate products as second products. Induces dermonecrosis, hemolysis, increased vascular permeability, edema, inflammatory response, and platelet aggregation. The polypeptide is Dermonecrotic toxin SdSicTox-betaIIB1bi (Sicarius cf. damarensis (strain GJB-2008) (Six-eyed sand spider)).